Here is a 72-residue protein sequence, read N- to C-terminus: Translation initiation factor IF-1 (72 aa).

The region spanning 1–72 is the S1-like domain; sequence MSKDDSIEFE…TKGRITYRMK (72 aa).

The protein belongs to the IF-1 family. As to quaternary structure, component of the 30S ribosomal translation pre-initiation complex which assembles on the 30S ribosome in the order IF-2 and IF-3, IF-1 and N-formylmethionyl-tRNA(fMet); mRNA recruitment can occur at any time during PIC assembly.

It is found in the cytoplasm. One of the essential components for the initiation of protein synthesis. Stabilizes the binding of IF-2 and IF-3 on the 30S subunit to which N-formylmethionyl-tRNA(fMet) subsequently binds. Helps modulate mRNA selection, yielding the 30S pre-initiation complex (PIC). Upon addition of the 50S ribosomal subunit IF-1, IF-2 and IF-3 are released leaving the mature 70S translation initiation complex. The sequence is that of Translation initiation factor IF-1 from Xanthomonas campestris pv. campestris (strain 8004).